A 1077-amino-acid chain; its full sequence is MARLFSPRPPPSEDLFYETYYSLSQQYPLLLLLLGIVLCALAALLAVAWASGRELTSDPSFLTTVLCALGGFSLLLGLASREQRLQRWTRPLSGLVWVALLALGHAFLFTGGVVSAWDQVSYFLFVIFTAYAMLPLGMRDAAVAGLASSLSHLLVLGLYLGPQPDSRPALLPQLAANAVLFLCGNVAGVYHKALMERALRATFREALSSLHSRRRLDTEKKHQEHLLLSILPAYLAREMKAEIMARLQAGQGSRPESTNNFHSLYVKRHQGVSVLYADIVGFTRLASECSPKELVLMLNELFGKFDQIAKEHECMRIKILGDCYYCVSGLPLSLPDHAINCVRMGLDMCRAIRKLRAATGVDINMRVGVHSGSVLCGVIGLQKWQYDVWSHDVTLANHMEAGGVPGRVHITGATLALLAGAYAVEDAGMEHRDPYLRELGEPTYLVIDPRAEEEDEKGTAGGLLSSLEGLKMRPSLLMTRYLESWGAAKPFAHLSHGDSPVSTSTPLPEKTLASFSTQWSLDRSRTPRGLDDELDTGDAKFFQVIEQLNSQKQWKQSKDFNPLTLYFREKEMEKEYRLSAIPAFKYYEACTFLVFLSNFIIQMLVTNRPPALAITYSITFLLFLLILFVCFSEDLMRCVLKGPKMLHWLPALSGLVATRPGLRIALGTATILLVFAMAITSLFFFPTSSDCPFQAPNVSSMISNLSWELPGSLPLISVPYSMHCCTLGFLSCSLFLHMSFELKLLLLLLWLAASCSLFLHSHAWLSECLIVRLYLGPLDSRPGVLKEPKLMGAISFFIFFFTLLVLARQNEYYCRLDFLWKKKLRQEREETETMENLTRLLLENVLPAHVAPQFIGQNRRNEDLYHQSYECVCVLFASVPDFKEFYSESNINHEGLECLRLLNEIIADFDELLSKPKFSGVEKIKTIGSTYMAATGLNATSGQDAQQDAERSCSHLGTMVEFAVALGSKLDVINKHSFNNFRLRVGLNHGPVVAGVIGAQKPQYDIWGNTVNVASRMESTGVLGKIQVTEETAWALQSLGYTCYSRGVIKVKGKGQLCTYFLNTDLTRTGPPSATLG.

Residues Met-1–Pro-28 are Cytoplasmic-facing. The next 6 membrane-spanning stretches (helical) occupy residues Leu-29–Ala-50, Phe-61–Ser-80, Gly-94–Trp-117, Val-120–Met-138, Ala-141–Pro-162, and Leu-170–Tyr-190. Topologically, residues His-191 to Lys-585 are cytoplasmic. Residues Asp-278, Ile-279, and Asp-322 each coordinate Mg(2+). Residues Asp-278–Thr-283, Leu-320–Asp-322, and Arg-366 contribute to the ATP site. The residue at position 520 (Ser-520) is a Phosphoserine. Thr-536 is subject to Phosphothreonine. 3 helical membrane-spanning segments follow: residues Tyr-586–Asn-607, Ala-611–Glu-633, and Ile-664–Thr-687. Residues Ser-688–Pro-714 are Extracellular-facing. Residues Asn-697 and Asn-704 are each glycosylated (N-linked (GlcNAc...) asparagine). The next 3 membrane-spanning stretches (helical) occupy residues Leu-715 to Leu-736, Leu-744 to Trp-764, and Met-791 to Ala-807. Over Arg-808–Gly-1077 the chain is Cytoplasmic. ATP is bound by residues Lys-925, Asp-1005 to Trp-1007, Asn-1012 to Arg-1016, and Lys-1052.

This sequence belongs to the adenylyl cyclase class-4/guanylyl cyclase family. The cofactor is Mg(2+). Mn(2+) serves as cofactor. Detected in the zona glomerulosa and the zona fasciculata in the adrenal gland (at protein level).

It localises to the cell membrane. It is found in the cytoplasm. It carries out the reaction ATP = 3',5'-cyclic AMP + diphosphate. Activated by forskolin. Insensitive to calcium/calmodulin. Stimulated by GNAS and by the G-protein beta and gamma subunit complex. Catalyzes the formation of the signaling molecule cAMP in response to G-protein signaling. The polypeptide is Adenylate cyclase type 4 (ADCY4) (Homo sapiens (Human)).